We begin with the raw amino-acid sequence, 167 residues long: Minor fimbrial protein PrsF (167 aa).

The first 18 residues, 1–18, serve as a signal peptide directing secretion; the sequence is MIRLSLFISLLLTSVAVL.

The protein localises to the secreted. It localises to the fimbrium. In terms of biological role, fimbriae (also called pili), polar filaments radiating from the surface of the bacterium to a length of 0.5-1.5 micrometers and numbering 100-300 per cell, enable bacteria to colonize the epithelium of specific host organs. This chain is Minor fimbrial protein PrsF (prsF), found in Escherichia coli.